We begin with the raw amino-acid sequence, 913 residues long: Isoleucine--tRNA ligase (913 aa).

The 'HIGH' region motif lies at 57 to 67 (PYANGDIHLGT). Glu549 provides a ligand contact to L-isoleucyl-5'-AMP. The 'KMSKS' region signature appears at 590 to 594 (KMSKS). Lys593 contributes to the ATP binding site. Residues Cys881, Cys884, Cys901, and Cys904 each contribute to the Zn(2+) site.

The protein belongs to the class-I aminoacyl-tRNA synthetase family. IleS type 1 subfamily. Monomer. Zn(2+) serves as cofactor.

It is found in the cytoplasm. The catalysed reaction is tRNA(Ile) + L-isoleucine + ATP = L-isoleucyl-tRNA(Ile) + AMP + diphosphate. Its function is as follows. Catalyzes the attachment of isoleucine to tRNA(Ile). As IleRS can inadvertently accommodate and process structurally similar amino acids such as valine, to avoid such errors it has two additional distinct tRNA(Ile)-dependent editing activities. One activity is designated as 'pretransfer' editing and involves the hydrolysis of activated Val-AMP. The other activity is designated 'posttransfer' editing and involves deacylation of mischarged Val-tRNA(Ile). The sequence is that of Isoleucine--tRNA ligase from Fervidobacterium nodosum (strain ATCC 35602 / DSM 5306 / Rt17-B1).